The primary structure comprises 402 residues: Nicotinate phosphoribosyltransferase (402 aa).

Residue His224 is modified to Phosphohistidine; by autocatalysis.

This sequence belongs to the NAPRTase family. In terms of processing, transiently phosphorylated on a His residue during the reaction cycle. Phosphorylation strongly increases the affinity for substrates and increases the rate of nicotinate D-ribonucleotide production. Dephosphorylation regenerates the low-affinity form of the enzyme, leading to product release.

It catalyses the reaction nicotinate + 5-phospho-alpha-D-ribose 1-diphosphate + ATP + H2O = nicotinate beta-D-ribonucleotide + ADP + phosphate + diphosphate. Its pathway is cofactor biosynthesis; NAD(+) biosynthesis; nicotinate D-ribonucleotide from nicotinate: step 1/1. Catalyzes the synthesis of beta-nicotinate D-ribonucleotide from nicotinate and 5-phospho-D-ribose 1-phosphate at the expense of ATP. The sequence is that of Nicotinate phosphoribosyltransferase from Neisseria meningitidis serogroup C (strain 053442).